Here is a 621-residue protein sequence, read N- to C-terminus: 1-deoxy-D-xylulose-5-phosphate synthase (621 aa).

Thiamine diphosphate contacts are provided by residues His80 and 121 to 123 (GHS). Asp152 lines the Mg(2+) pocket. Residues 153–154 (GA), Asn181, Tyr288, and Glu370 contribute to the thiamine diphosphate site. Asn181 provides a ligand contact to Mg(2+).

This sequence belongs to the transketolase family. DXPS subfamily. Homodimer. The cofactor is Mg(2+). Thiamine diphosphate is required as a cofactor.

The enzyme catalyses D-glyceraldehyde 3-phosphate + pyruvate + H(+) = 1-deoxy-D-xylulose 5-phosphate + CO2. It functions in the pathway metabolic intermediate biosynthesis; 1-deoxy-D-xylulose 5-phosphate biosynthesis; 1-deoxy-D-xylulose 5-phosphate from D-glyceraldehyde 3-phosphate and pyruvate: step 1/1. Its function is as follows. Catalyzes the acyloin condensation reaction between C atoms 2 and 3 of pyruvate and glyceraldehyde 3-phosphate to yield 1-deoxy-D-xylulose-5-phosphate (DXP). The sequence is that of 1-deoxy-D-xylulose-5-phosphate synthase from Shewanella sediminis (strain HAW-EB3).